The following is a 120-amino-acid chain: MRLPAQLLGLLMLWVSGSSGDIVMTQSPLSLPVTPGEPASISCRSSQSLLHSNGYNYLDWYLQKPGQSPQLLIYLGSNRASGVPDRFSGSGSGTDFTLKISRVEAEDVGVYYCMQALQTP.

The signal sequence occupies residues 1–19; that stretch reads MRLPAQLLGLLMLWVSGSS. Residues 20–120 form the Ig-like domain; that stretch reads GDIVMTQSPL…YYCMQALQTP (101 aa). The interval 21–43 is framework-1; it reads DIVMTQSPLSLPVTPGEPASISC. Cysteine 43 and cysteine 113 are disulfide-bonded. The segment at 44-59 is complementarity-determining-1; sequence RSSQSLLHSNGYNYLD. The interval 60–74 is framework-2; sequence WYLQKPGQSPQLLIY. The complementarity-determining-2 stretch occupies residues 75-81; that stretch reads LGSNRAS. Residues 82 to 113 form a framework-3 region; it reads GVPDRFSGSGSGTDFTLKISRVEAEDVGVYYC. A complementarity-determining-3 region spans residues 114-120; sequence MQALQTP.

As to quaternary structure, immunoglobulins are composed of two identical heavy chains and two identical light chains; disulfide-linked.

Its subcellular location is the secreted. It is found in the cell membrane. Functionally, v region of the variable domain of immunoglobulin light chains that participates in the antigen recognition. Immunoglobulins, also known as antibodies, are membrane-bound or secreted glycoproteins produced by B lymphocytes. In the recognition phase of humoral immunity, the membrane-bound immunoglobulins serve as receptors which, upon binding of a specific antigen, trigger the clonal expansion and differentiation of B lymphocytes into immunoglobulins-secreting plasma cells. Secreted immunoglobulins mediate the effector phase of humoral immunity, which results in the elimination of bound antigens. The antigen binding site is formed by the variable domain of one heavy chain, together with that of its associated light chain. Thus, each immunoglobulin has two antigen binding sites with remarkable affinity for a particular antigen. The variable domains are assembled by a process called V-(D)-J rearrangement and can then be subjected to somatic hypermutations which, after exposure to antigen and selection, allow affinity maturation for a particular antigen. In Homo sapiens (Human), this protein is Immunoglobulin kappa variable 2D-28.